Consider the following 130-residue polypeptide: Small ribosomal subunit protein uS8 (130 aa).

The protein belongs to the universal ribosomal protein uS8 family. Part of the 30S ribosomal subunit.

Its function is as follows. One of the primary rRNA binding proteins, it binds directly to 16S rRNA central domain where it helps coordinate assembly of the platform of the 30S subunit. This Pyrobaculum calidifontis (strain DSM 21063 / JCM 11548 / VA1) protein is Small ribosomal subunit protein uS8.